Consider the following 172-residue polypeptide: Small ribosomal subunit protein uS5 (172 aa).

An S5 DRBM domain is found at Leu-17–Val-80.

The protein belongs to the universal ribosomal protein uS5 family. In terms of assembly, part of the 30S ribosomal subunit. Contacts proteins S4 and S8.

Functionally, with S4 and S12 plays an important role in translational accuracy. Its function is as follows. Located at the back of the 30S subunit body where it stabilizes the conformation of the head with respect to the body. The chain is Small ribosomal subunit protein uS5 from Burkholderia orbicola (strain AU 1054).